The primary structure comprises 787 residues: MSSKQATSPFACAADGEDAMTQDLTSREKEEGSDQHVASHLPLHPIMHNKPHSEELPTLVNTIQQDADWDSVLSSQQRMESENNKLCSLYSFRNTSTSPHKPDEGSRDREIMTSVTFGTPERRKGSLADVVDTLKQKKLEEMTRTEQEDPSCMEKLLSKDWKEKMERLNTSELLGEIKGTPESLAEKERQLSTMITQLISLREQLLAAHDEQKKLAASQIEKQRQQMDLARQQQEQIARQQQQLLQQQHKINLLQQQIQVQGHMPPLMIPIFPHDQRTLAAAAAAQQGFLFPPGITYKPGDNYPVQFIPSTMAAAAASGLSPLQLQQLYAAQLASMQVSPGAKMPSTPQPPNTAGTVSPTGIKNEKRGTSPVTQVKDEAAAQPLNLSSRPKTAEPVKSPTSPTQNLFPASKTSPVNLPNKSSIPSPIGGSLGRGSSLDILSSLNSPALFGDQDTVMKAIQEARKMREQIQREQQQQQPHGVDGKLSSINNMGLNNCRNEKERTRFENLGPQLTGKSNEDGKLGPGVIDLTRPEDAEGSKAMNGSAAKLQQYYCWPTGGATVAEARVYRDARGRASSEPHIKRPMNAFMVWAKDERRKILQAFPDMHNSNISKILGSRWKSMSNQEKQPYYEEQARLSKIHLEKYPNYKYKPRPKRTCIVDGKKLRIGEYKQLMRSRRQEMRQFFTVGQQPQIPITTGTGVVYPGAITMATTTPSPQMTSDCSSTSASPEPSLPVIQSTYGMKTDGGSLAGNEMINGEDEMEMYDDYEDDPKSDYSSENEAPEAVSAN.

Residues 1–46 (MSSKQATSPFACAADGEDAMTQDLTSREKEEGSDQHVASHLPLHPI) are disordered. Basic and acidic residues predominate over residues 25 to 34 (TSREKEEGSD). T119 is subject to Phosphothreonine. The stretch at 184–262 (LAEKERQLST…LLQQQIQVQG (79 aa)) forms a coiled coil. The interval 340–429 (PGAKMPSTPQ…KSSIPSPIGG (90 aa)) is disordered. The segment covering 352 to 361 (NTAGTVSPTG) has biased composition (polar residues). Phosphoserine is present on S358. T360 is modified (phosphothreonine). Glycyl lysine isopeptide (Lys-Gly) (interchain with G-Cter in SUMO) cross-links involve residues K363 and K376. Phosphoserine occurs at positions 398 and 401. The segment covering 398-420 (SPTSPTQNLFPASKTSPVNLPNK) has biased composition (polar residues). The segment at residues 580–648 (IKRPMNAFMV…IHLEKYPNYK (69 aa)) is a DNA-binding region (HMG box). A compositionally biased stretch (polar residues) spans 712–740 (TPSPQMTSDCSSTSASPEPSLPVIQSTYG). The disordered stretch occupies residues 712–787 (TPSPQMTSDC…NEAPEAVSAN (76 aa)). Residues 755-768 (NGEDEMEMYDDYED) show a composition bias toward acidic residues.

As to quaternary structure, homodimer. Interacts with DAZAP2. May interact with CENPK. Post-translationally, sumoylation inhibits the transcriptional activity.

The protein localises to the nucleus. It is found in the cytoplasm. Transcription factor that plays a key role in several developmental processes, including neurogenesis, chondrocytes differentiation and cartilage formation. Specifically binds the 5'-AACAAT-3' DNA motif present in enhancers and super-enhancers and promotes expression of genes important for chondrogenesis. Required for overt chondrogenesis when condensed prechondrocytes differentiate into early stage chondrocytes: SOX5 and SOX6 cooperatively bind with SOX9 on active enhancers and super-enhancers associated with cartilage-specific genes, and thereby potentiate SOX9's ability to transactivate. Not involved in precartilaginous condensation, the first step in chondrogenesis, during which skeletal progenitors differentiate into prechondrocytes. Together with SOX5, required to form and maintain a pool of highly proliferating chondroblasts between epiphyses and metaphyses, to form columnar chondroblasts, delay chondrocyte prehypertrophy but promote hypertrophy, and to delay terminal differentiation of chondrocytes on contact with ossification fronts. Binds to the proximal promoter region of the myelin protein MPZ gene, and is thereby involved in the differentiation of oligodendroglia in the developing spinal tube. Binds to the gene promoter of MBP and acts as a transcriptional repressor. The protein is Transcription factor SOX-6 of Pongo abelii (Sumatran orangutan).